Here is a 161-residue protein sequence, read N- to C-terminus: NADH:FMN oxidoreductase (161 aa).

Residues Asp-30, 37–40 (AAST), 54–61 (CVQNSSTT), Ala-88, Arg-94, and Phe-151 contribute to the FMN site.

This sequence belongs to the non-flavoprotein flavin reductase family.

The protein resides in the cytoplasm. It carries out the reaction FMNH2 + NAD(+) = FMN + NADH + 2 H(+). It catalyses the reaction FADH2 + NAD(+) = FAD + NADH + 2 H(+). Its pathway is sulfur metabolism; dibenzothiophene degradation. An NADH:FMN oxidoreductase which supplies reduced FMN for the '4S' desulfurization pathway that removes covalently bound sulfur from dibenzothiophene (DBT) without breaking carbon-carbon bonds. Can also use FAD. Provides DszC and probably also DszA (DBT-monooxygenase and DBTO2-monooxygenase respectively) with reduced flavin (FMN and/or FAD). The sequence is that of NADH:FMN oxidoreductase from Mycolicibacterium goodii (Mycobacterium goodii).